Here is a 284-residue protein sequence, read N- to C-terminus: Lipase chaperone (284 aa).

A helical transmembrane segment spans residues Ile-4–Ser-24.

It belongs to the lipase chaperone family.

The protein resides in the cell inner membrane. May be involved in the folding of the extracellular lipase during its passage through the periplasm. The protein is Lipase chaperone (lifO) of Vibrio cholerae serotype O1 (strain ATCC 39315 / El Tor Inaba N16961).